The chain runs to 380 residues: MASGSTASEEERSLRECELYVQKHNIQALLKDSIVQLCTARPERPMAFLREYFERLEKEEAKQIQNLQKASARADSREDEISPPPPNPVVKGRRRRGAISAEVYTEEDAASYVRKVIPKDYKTMAALAKAIEKNVLFSHLDDNERSDIFDAMFPVSFIAGETVIQQGDEGDNFYVIDQGEMDVYVNNEWATSVGEGGSFGELALIYGTPRAATVKAKTNVKLWGNDRDSYRRILMGSTLRKRKMYEEFLSKVSILESLDKWERLTVADALEPVQFEDGQKIVVQGEPGDEFFIILEGSAAVLQRRSENEEFVEVGRLGPSDYFGEIALLMNRPRAATVVARGPLKCVKLDRPRFERVLGPCSDILKRNIQQYNSFVSLSV.

Met-1 bears the N-acetylmethionine mark. Ala-2 is subject to N-acetylalanine; in cAMP-dependent protein kinase type I-alpha regulatory subunit, N-terminally processed. A dimerization and phosphorylation region spans residues 2-135; sequence ASGSTASEEE…ALAKAIEKNV (134 aa). Ser-3, Ser-76, and Ser-82 each carry phosphoserine. Residues 64–96 are disordered; sequence IQNLQKASARADSREDEISPPPPNPVVKGRRRR. The short motif at 95–99 is the Pseudophosphorylation motif element; sequence RRGAI. Ser-100 is subject to Phosphoserine. Residues 136–253, Glu-201, Arg-210, 254–380, Glu-325, and Arg-334 each bind 3',5'-cyclic AMP; these read LFSH…SKVS and ILES…SLSV. Ser-257 bears the Phosphoserine mark.

Belongs to the cAMP-dependent kinase regulatory chain family. In terms of assembly, the inactive holoenzyme is composed of two regulatory chains and two catalytic chains. Activation by cAMP releases the two active catalytic monomers and the regulatory dimer. Interacts with PRKACA and PRKACB. PRKAR1A also interacts with RFC2; the complex may be involved in cell survival. Interacts with AKAP4. Interacts with RARA; the interaction occurs in the presence of cAMP or FSH and regulates RARA transcriptional activity. Interacts with the phosphorylated form of PJA2. Interacts with CBFA2T3. Interacts with PRKX; regulates this cAMP-dependent protein kinase. Interacts with smAKAP; this interaction may target PRKAR1A to the plasma membrane. Interacts with AICDA. In terms of processing, the pseudophosphorylation site binds to the substrate-binding region of the catalytic chain, resulting in the inhibition of its activity. In terms of tissue distribution, four types of regulatory chains are found: I-alpha, I-beta, II-alpha, and II-beta. Their expression varies among tissues and is in some cases constitutive and in others inducible.

Its subcellular location is the cell membrane. Regulatory subunit of the cAMP-dependent protein kinases involved in cAMP signaling in cells. This chain is cAMP-dependent protein kinase type I-alpha regulatory subunit (PRKAR1A), found in Sus scrofa (Pig).